Here is a 418-residue protein sequence, read N- to C-terminus: Voltage-gated ClC-type chloride channel ClcB (418 aa).

The next 10 helical transmembrane spans lie at 5–25 (LLIA…FRHA), 54–74 (LLTP…WQKF), 146–166 (LWIA…PLAG), 168–188 (LFIA…PVII), 222–242 (ALII…LTLM), 258–278 (WQLA…PAVW), 291–311 (APPL…AVLA), 316–336 (GAPG…GMLY), 352–372 (LLLG…APIM), and 380–400 (MTGE…ASVI).

It belongs to the chloride channel (TC 2.A.49) family. ClcB subfamily.

The protein localises to the cell inner membrane. Probably acts as an electrical shunt for an outwardly-directed proton pump that is linked to amino acid decarboxylation, as part of the extreme acid resistance (XAR) response. This chain is Voltage-gated ClC-type chloride channel ClcB, found in Escherichia coli O17:K52:H18 (strain UMN026 / ExPEC).